A 186-amino-acid polypeptide reads, in one-letter code: Enhancer of split m7 protein (186 aa).

Positions 13-68 constitute a bHLH domain; sequence YRKVMKPLLERKRRARINKCLDELKDLMAECVAQTGDAKFEKADILEVTVQHLRKL. The region spanning 83 to 116 is the Orange domain; that stretch reads FRAGYIRAANEVSRALASLPRVDVAFGTTLMTHL. Positions 183–186 match the WRPW motif motif; sequence WRPW.

In terms of assembly, transcription repression requires formation of a complex with a corepressor protein (Groucho). Forms homodimers.

The protein resides in the nucleus. In terms of biological role, participates in the control of cell fate choice by uncommitted neuroectodermal cells in the embryo. Transcriptional repressor. Binds DNA on N-box motifs: 5'-CACNAG-3'. This is Enhancer of split m7 protein from Drosophila melanogaster (Fruit fly).